Consider the following 542-residue polypeptide: Chaperonin GroEL 2 (542 aa).

ATP-binding positions include 30-33 (TLGP), K51, 87-91 (DGTTT), G415, and D496.

It belongs to the chaperonin (HSP60) family. Forms a cylinder of 14 subunits composed of two heptameric rings stacked back-to-back. Interacts with the co-chaperonin GroES.

It localises to the cytoplasm. It catalyses the reaction ATP + H2O + a folded polypeptide = ADP + phosphate + an unfolded polypeptide.. In terms of biological role, together with its co-chaperonin GroES, plays an essential role in assisting protein folding. The GroEL-GroES system forms a nano-cage that allows encapsulation of the non-native substrate proteins and provides a physical environment optimized to promote and accelerate protein folding. The polypeptide is Chaperonin GroEL 2 (Sinorhizobium fredii (strain NBRC 101917 / NGR234)).